A 91-amino-acid polypeptide reads, in one-letter code: Cell division topological specificity factor (91 aa).

The protein belongs to the MinE family.

Its function is as follows. Prevents the cell division inhibition by proteins MinC and MinD at internal division sites while permitting inhibition at polar sites. This ensures cell division at the proper site by restricting the formation of a division septum at the midpoint of the long axis of the cell. The protein is Cell division topological specificity factor of Thermoanaerobacter pseudethanolicus (strain ATCC 33223 / 39E) (Clostridium thermohydrosulfuricum).